Reading from the N-terminus, the 62-residue chain is MSETPAAFDRRMLEALVCPVTHATLEYDAGAQELVSKGAKLAFPIRNGIPVMLVDEARPLDD.

This sequence belongs to the UPF0434 family.

The polypeptide is UPF0434 protein SPO3421 (Ruegeria pomeroyi (strain ATCC 700808 / DSM 15171 / DSS-3) (Silicibacter pomeroyi)).